A 451-amino-acid polypeptide reads, in one-letter code: NADH-quinone oxidoreductase subunit H (451 aa).

Transmembrane regions (helical) follow at residues 30-50, 98-118, 138-158, 176-196, 213-233, 262-282, 302-322, 336-356, and 368-388; these read LIIV…LFMI, AVFI…FAVI, LPVA…GIVL, AAQV…VFLY, WGIL…VGET, LFYL…TTLF, WWPV…FIWL, QFGW…EAAI, and VIPF…ADLV.

Belongs to the complex I subunit 1 family. NDH-1 is composed of 14 different subunits. Subunits NuoA, H, J, K, L, M, N constitute the membrane sector of the complex.

It localises to the cell membrane. It catalyses the reaction a quinone + NADH + 5 H(+)(in) = a quinol + NAD(+) + 4 H(+)(out). Functionally, NDH-1 shuttles electrons from NADH, via FMN and iron-sulfur (Fe-S) centers, to quinones in the respiratory chain. The immediate electron acceptor for the enzyme in this species is believed to be ubiquinone. Couples the redox reaction to proton translocation (for every two electrons transferred, four hydrogen ions are translocated across the cytoplasmic membrane), and thus conserves the redox energy in a proton gradient. This subunit may bind ubiquinone. This is NADH-quinone oxidoreductase subunit H from Acidothermus cellulolyticus (strain ATCC 43068 / DSM 8971 / 11B).